Reading from the N-terminus, the 451-residue chain is Probable plasmid replicative DNA helicase (451 aa).

The region spanning 194-451 (QNSFFDAFPT…SKFSAIKKVW (258 aa)) is the SF4 helicase domain. 225-232 (ARPSIGKT) lines the ATP pocket.

This sequence belongs to the helicase family. DnaB subfamily. As to quaternary structure, homohexamer.

The enzyme catalyses Couples ATP hydrolysis with the unwinding of duplex DNA at the replication fork by translocating in the 5'-3' direction. This creates two antiparallel DNA single strands (ssDNA). The leading ssDNA polymer is the template for DNA polymerase III holoenzyme which synthesizes a continuous strand.. It catalyses the reaction ATP + H2O = ADP + phosphate + H(+). A replicative DNA helicase, it participates in initiation and elongation during DNA replication. Travels ahead of the DNA replisome, separating dsDNA into templates for DNA synthesis. A processive ATP-dependent 5'-3' DNA helicase it has DNA-dependent ATPase activity. Its function is as follows. The plasmid this protein is encoded on is thought to be required for growth within mammalian cells. The polypeptide is Probable plasmid replicative DNA helicase (Chlamydia trachomatis serovar L2 (strain ATCC VR-902B / DSM 19102 / 434/Bu)).